A 117-amino-acid chain; its full sequence is Large ribosomal subunit protein bL20 (117 aa).

This sequence belongs to the bacterial ribosomal protein bL20 family.

Functionally, binds directly to 23S ribosomal RNA and is necessary for the in vitro assembly process of the 50S ribosomal subunit. It is not involved in the protein synthesizing functions of that subunit. The polypeptide is Large ribosomal subunit protein bL20 (Wigglesworthia glossinidia brevipalpis).